A 1480-amino-acid polypeptide reads, in one-letter code: Cystic fibrosis transmembrane conductance regulator (1480 aa).

Residues 1-77 (MQRSPLEKAS…KLINALRRCF (77 aa)) are Cytoplasmic-facing. Residues 78 to 98 (FWRFMFYGIFLYLGEVTKAVQ) traverse the membrane as a helical segment. An ABC transmembrane type-1 1 domain is found at 81–365 (FMFYGIFLYL…WAVQTWYDSL (285 aa)). Topologically, residues 99–122 (PLLLGRIIASYDPDNKEERSIAIY) are extracellular. Residues 123–146 (LGIGLCLLFIVRTLLLHPAIFGLH) form a helical membrane-spanning segment. Topologically, residues 147 to 195 (HIGMQMRIAMFSLIYKKTLKLSSRVLDKISIGQLVSLLSNNLNKFDEGL) are cytoplasmic. The helical transmembrane segment at 196-216 (ALAHFVWIAPLQVALLMGLIW) threads the bilayer. The Extracellular segment spans residues 217-222 (ELLQAS). A helical transmembrane segment spans residues 223–243 (AFCGLGFLIVLALFQAGLGRM). Residues 244–298 (MMKYRDQRAGKINERLVITSEMIENIQSVKAYCWEEAMEKMIENLRQTELKLTRK) are Cytoplasmic-facing. Residues 299 to 319 (AAYVRYFNSSAFFFSGFFVVF) form a helical membrane-spanning segment. The Extracellular segment spans residues 320-339 (LSVLPYALIKGIVLRKIFTT). Residues 340–358 (ISFCIVLRMAVTRQFPWAV) form a helical membrane-spanning segment. Residues 359–858 (QTWYDSLGAI…YLRYITVHKS (500 aa)) lie on the Cytoplasmic side of the membrane. Residues tryptophan 401, serine 434, 458–465 (GSTGAGKT), and glutamine 493 each bind ATP. The ABC transporter 1 domain occupies 423-646 (NGDDSLFFSN…RPDFSSKLMG (224 aa)). Residue cysteine 524 is the site of S-palmitoyl cysteine attachment. Phosphoserine occurs at positions 549 and 660. Residues 654–831 (SAERRNSILT…EEINEEDLKE (178 aa)) form a disordered R region region. Position 670 is a phosphoserine; by PKA (serine 670). A Glycyl lysine isopeptide (Lys-Gly) (interchain with G-Cter in ubiquitin) cross-link involves residue lysine 688. Phosphoserine occurs at positions 700 and 712. Phosphothreonine is present on threonine 717. A phosphoserine mark is found at serine 737, serine 753, serine 768, serine 790, serine 795, and serine 813. Residues 859 to 879 (LIFVLIWCLVIFLAEVAASLV) form a helical membrane-spanning segment. In terms of domain architecture, ABC transmembrane type-1 2 spans 859-1155 (LIFVLIWCLV…AVNSSIDVDS (297 aa)). At 880-918 (VLWLLGNTPLQDKGNSTHSRNNSYAVIITSTSSYYVFYI) the chain is on the extracellular side. N-linked (GlcNAc...) asparagine glycosylation is found at asparagine 894 and asparagine 900. Residues 919–939 (YVGVADTLLAMGFFRGLPLVH) traverse the membrane as a discontinuously helical segment. The Cytoplasmic segment spans residues 940–990 (TLITVSKILHNKMLHSVLQAPMSTLNTLKAGGILNRFSKDIAILDDLLPLT). The helical transmembrane segment at 991-1011 (IFDFIQLLLIVIGAIAVVAVL) threads the bilayer. Over 1012–1013 (QP) the chain is Extracellular. The helical transmembrane segment at 1014 to 1034 (YIFVATVPVIVAFIMLRAYFL) threads the bilayer. Over 1035–1095 (QTSQQLKQLE…TANWFLYLST (61 aa)) the chain is Cytoplasmic. The chain crosses the membrane as a helical span at residues 1096 to 1116 (LRWFQMRIEMIFVIFFIAVTF). The Extracellular segment spans residues 1117 to 1130 (ISILTTGEGEGRVG). Residues 1131–1151 (IILTLAMNIMSTLQWAVNSSI) traverse the membrane as a helical segment. Over 1152-1480 (DVDSLMRSVS…TEEEVQDTRL (329 aa)) the chain is Cytoplasmic. The ABC transporter 2 domain occupies 1210-1443 (MTVKDLTAKY…RSLFQQAISP (234 aa)). Residues tyrosine 1219 and 1244 to 1251 (GRTGSGKS) contribute to the ATP site. Residues 1386–1480 (RTLKQAFADC…TEEEVQDTRL (95 aa)) form an interaction with GORASP2 region. Residue cysteine 1395 is the site of S-palmitoyl cysteine attachment. Serine 1444 and serine 1456 each carry phosphoserine. The disordered stretch occupies residues 1452 to 1480 (HRNSSKCKSKPQIAALKEETEEEVQDTRL). The span at 1470-1480 (ETEEEVQDTRL) shows a compositional bias: acidic residues. Positions 1478–1480 (TRL) match the PDZ-binding motif.

Belongs to the ABC transporter superfamily. ABCC family. CFTR transporter (TC 3.A.1.202) subfamily. In terms of assembly, monomer; does not require oligomerization for channel activity. May form oligomers in the membrane. Interacts with SLC26A3, SLC26A6 and NHERF1. Interacts with SHANK2. Interacts with MYO6. Interacts (via C-terminus) with GOPC (via PDZ domain); this promotes CFTR internalization and thereby decreases channel activity. Interacts with SLC4A7 through NHERF1. Found in a complex with MYO5B and RAB11A. Interacts with ANO1. Interacts with SLC26A8. Interacts with AHCYL1; the interaction increases CFTR activity. Interacts with CSE1L. The core-glycosylated form interacts with GORASP2 (via PDZ GRASP-type 1 domain) in respone to ER stress. Interacts with MARCHF2; the interaction leads to CFTR ubiqtuitination and degradation. Interacts with ADGRG2. N-glycosylated. Post-translationally, phosphorylated; cAMP treatment promotes phosphorylation and activates the channel. Dephosphorylation decreases the ATPase activity (in vitro). Phosphorylation at PKA sites activates the channel. Phosphorylation at PKC sites enhances the response to phosphorylation by PKA. Phosphorylated by AMPK; this inhibits channel activity. In terms of processing, ubiquitinated, leading to its degradation in the lysosome. Deubiquitination by USP10 in early endosomes enhances its endocytic recycling to the cell membrane. Ubiquitinated by RNF185 during ER stress. Ubiquitinated by MARCHF2.

It localises to the apical cell membrane. The protein resides in the early endosome membrane. The protein localises to the cell membrane. Its subcellular location is the recycling endosome membrane. It is found in the endoplasmic reticulum membrane. It localises to the nucleus. It catalyses the reaction ATP + H2O + closed Cl(-) channel = ADP + phosphate + open Cl(-) channel.. It carries out the reaction chloride(in) = chloride(out). The enzyme catalyses hydrogencarbonate(in) = hydrogencarbonate(out). The catalysed reaction is ATP + H2O = ADP + phosphate + H(+). In terms of biological role, epithelial ion channel that plays an important role in the regulation of epithelial ion and water transport and fluid homeostasis. Mediates the transport of chloride ions across the cell membrane. Possesses an intrinsic ATPase activity and utilizes ATP to gate its channel; the passive flow of anions through the channel is gated by cycles of ATP binding and hydrolysis by the ATP-binding domains. The ion channel is also permeable to HCO(3)(-); selectivity depends on the extracellular chloride concentration. Exerts its function also by modulating the activity of other ion channels and transporters. Contributes to the regulation of the pH and the ion content of the epithelial fluid layer. Modulates the activity of the epithelial sodium channel (ENaC) complex, in part by regulating the cell surface expression of the ENaC complex. May regulate bicarbonate secretion and salvage in epithelial cells by regulating the transporter SLC4A7. Can inhibit the chloride channel activity of ANO1. Plays a role in the chloride and bicarbonate homeostasis during sperm epididymal maturation and capacitation. The chain is Cystic fibrosis transmembrane conductance regulator from Pongo abelii (Sumatran orangutan).